A 226-amino-acid chain; its full sequence is UPF0758 protein SE_1336 (226 aa).

One can recognise an MPN domain in the interval 102–224 (QITHPSDVAS…FTSLVEAGYF (123 aa)). Zn(2+) is bound by residues histidine 173, histidine 175, and aspartate 186. A JAMM motif motif is present at residues 173 to 186 (HNHPSGDVTPSKED).

This sequence belongs to the UPF0758 family.

In Staphylococcus epidermidis (strain ATCC 12228 / FDA PCI 1200), this protein is UPF0758 protein SE_1336.